Here is a 274-residue protein sequence, read N- to C-terminus: tRNA-cytidine(32) 2-sulfurtransferase (274 aa).

The PP-loop motif signature appears at 40–45; sequence SGGKDS. Residues C115, C118, and C206 each coordinate [4Fe-4S] cluster.

The protein belongs to the TtcA family. In terms of assembly, homodimer. The cofactor is Mg(2+). [4Fe-4S] cluster is required as a cofactor.

The protein resides in the cytoplasm. The enzyme catalyses cytidine(32) in tRNA + S-sulfanyl-L-cysteinyl-[cysteine desulfurase] + AH2 + ATP = 2-thiocytidine(32) in tRNA + L-cysteinyl-[cysteine desulfurase] + A + AMP + diphosphate + H(+). Its pathway is tRNA modification. Catalyzes the ATP-dependent 2-thiolation of cytidine in position 32 of tRNA, to form 2-thiocytidine (s(2)C32). The sulfur atoms are provided by the cysteine/cysteine desulfurase (IscS) system. This Pseudomonas syringae pv. tomato (strain ATCC BAA-871 / DC3000) protein is tRNA-cytidine(32) 2-sulfurtransferase.